The chain runs to 133 residues: Large ribosomal subunit protein eL19 (133 aa).

The segment at 55–83 (RGISGARKKPRRKGPGSRKGGKYSKLPRK) is disordered. Over residues 60-83 (ARKKPRRKGPGSRKGGKYSKLPRK) the composition is skewed to basic residues.

It belongs to the eukaryotic ribosomal protein eL19 family. Part of the 50S ribosomal subunit.

Its function is as follows. Binds to the 23S rRNA. This is Large ribosomal subunit protein eL19 from Korarchaeum cryptofilum (strain OPF8).